The chain runs to 883 residues: Kinesin-like protein 5 (883 aa).

Positions 6–390 (SITVTVRVRP…LKYANRAKNI (385 aa)) constitute a Kinesin motor domain. 144 to 151 (GATGCGKT) contributes to the ATP binding site. Coiled coils occupy residues 396–435 (RNMI…SSQS) and 563–588 (LQDE…VDEF). Residues 755 to 785 (VSPMLEDKPEPGLLIKSPLEKKQEVNSESTQ) form a disordered region.

This sequence belongs to the TRAFAC class myosin-kinesin ATPase superfamily. Kinesin family. Kinesin II subfamily. In terms of assembly, heterodimer with klp6.

Its subcellular location is the cytoplasm. It is found in the cytoskeleton. The protein resides in the chromosome. It localises to the centromere. The protein localises to the kinetochore. Its subcellular location is the spindle. Functionally, has a role in establishing metaphase during mitosis. Required for chromosome segregation where it generates tension during kinetochore capturing. The chain is Kinesin-like protein 5 (klp5) from Schizosaccharomyces pombe (strain 972 / ATCC 24843) (Fission yeast).